The primary structure comprises 606 residues: Protein couch potato (606 aa).

A Nuclear localization signal motif is present at residues 81–105 (IKRRPTLPQTPASAPQVLSPSPKRQ). Tandem repeats lie at residues 91–95 (PASAP), 109–113 (AVSVL), 114–118 (PVTVP), 122–126 (PVSVP), 128–132 (PVSVP), 134–138 (PVSVK), and 159–163 (PISHP). The tract at residues 91–164 (PASAPQVLSP…SHSHPISHPH (74 aa)) is 7 X 5 AA approximate repeats of P-V-S-V-P. 4 disordered regions span residues 147–166 (QIAH…PHHH), 282–311 (QQQQ…AGAA), 324–365 (VPTT…TSAA), and 388–410 (PATS…NSNS). A compositionally biased stretch (low complexity) spans 344 to 365 (SNSATASAPTTPSPAGSVTSAA). Positions 442-524 (RTLFVSGLPM…QTIRLEFAKS (83 aa)) constitute an RRM domain.

As to expression, expressed in neural precursors and their daughter cells in the embryonic peripheral nervous system. Less abundant in a number of glial cells in the peripheral and central nervous systems and also present at low levels in the developing gut.

It localises to the nucleus. May play a role in the development or function of the peripheral nervous system by regulating the processing of nervous system-specific transcripts. This chain is Protein couch potato (cpo), found in Drosophila melanogaster (Fruit fly).